A 277-amino-acid chain; its full sequence is Glycerol-3-phosphate acyltransferase (277 aa).

The next 5 helical transmembrane spans lie at 3–23 (LFIF…AIIV), 55–75 (IMVM…AKFL), 79–99 (PVTV…PVFF), 111–131 (IGAL…TWLL), and 155–175 (LILV…ILVL). Residues 207 to 277 (SPATSAEQEF…PKTKTVKEKE (71 aa)) form a disordered region. Residues 216-239 (FPGKEVIDTNIDETEKTEQAEAVK) show a composition bias toward basic and acidic residues. Composition is skewed to basic residues over residues 240 to 253 (KPKV…AKKT) and 262 to 271 (KPKSTKPKTK).

It belongs to the PlsY family. As to quaternary structure, probably interacts with PlsX.

It is found in the cell inner membrane. The enzyme catalyses an acyl phosphate + sn-glycerol 3-phosphate = a 1-acyl-sn-glycero-3-phosphate + phosphate. The protein operates within lipid metabolism; phospholipid metabolism. Catalyzes the transfer of an acyl group from acyl-phosphate (acyl-PO(4)) to glycerol-3-phosphate (G3P) to form lysophosphatidic acid (LPA). This enzyme utilizes acyl-phosphate as fatty acyl donor, but not acyl-CoA or acyl-ACP. The chain is Glycerol-3-phosphate acyltransferase from Legionella pneumophila subsp. pneumophila (strain Philadelphia 1 / ATCC 33152 / DSM 7513).